The chain runs to 356 residues: CMP-sialic acid transporter 2 (356 aa).

The segment covering 1–24 has biased composition (basic and acidic residues); that stretch reads MEYRRVKDQESYDVVSQKDIESPG. A disordered region spans residues 1–44; sequence MEYRRVKDQESYDVVSQKDIESPGERSLSSTSATSSLSTAGASK. Residues 1-52 are Cytoplasmic-facing; that stretch reads MEYRRVKDQESYDVVSQKDIESPGERSLSSTSATSSLSTAGASKGKNSWKLK. Positions 27–44 are enriched in low complexity; it reads SLSSTSATSSLSTAGASK. A helical transmembrane segment spans residues 53 to 73; sequence SIVTLALTLLTSSQAILIVWS. Topologically, residues 74–82 are lumenal; the sequence is KRAGKYEYS. A helical membrane pass occupies residues 83-103; sequence VTTANFSVEALKCLLSLIALY. The Cytoplasmic segment spans residues 104 to 125; that stretch reads RTWNSQGVTEDNRLSTSFDEVS. A helical membrane pass occupies residues 126-146; the sequence is VYPIPAILYMVKNLLQYYIFA. Topologically, residues 147-149 are lumenal; sequence YVD. A helical membrane pass occupies residues 150–172; sequence APAYQILKNLNIISTGVLYRIIL. The Cytoplasmic segment spans residues 173 to 175; the sequence is KKK. Residues 176–196 form a helical membrane-spanning segment; it reads LSEIQWAAFILLCAGCTTAQL. The Lumenal segment spans residues 197-211; it reads NPSSDHVLQTPIQGW. Residues 212–232 traverse the membrane as a helical segment; it reads VMAIVMALLSGFAGVYTEAII. Topologically, residues 233 to 239 are cytoplasmic; it reads KKRPSRN. Residues 240–260 form a helical membrane-spanning segment; the sequence is INVQNFWLYIFGMLFNLVAIC. Topologically, residues 261-277 are lumenal; sequence VQDFDAVMNKGFFHGYS. Residues 278–298 traverse the membrane as a helical segment; it reads FITVLMILNHALSGIAVSMVM. Topologically, residues 299 to 314 are cytoplasmic; sequence KYADNIVKVYSTSVAM. A helical transmembrane segment spans residues 315 to 335; it reads LLTAVVSVFLFGFHLSLAFFL. Over 336-356 the chain is Lumenal; it reads GSTVVSVSVYLHSVGKPQPQK.

This sequence belongs to the nucleotide-sugar transporter family. CMP-Sialate:CMP antiporter (TC 2.A.7.12) subfamily. In terms of tissue distribution, expressed in roots, leaves and stalks.

The protein localises to the golgi apparatus membrane. Its function is as follows. Sugar transporter involved in the transport of CMP-sialic acid from the cytoplasm into the Golgi. May transport important nucleotide sugars such as CMP-Kdo (2-keto-3-deoxy-D-manno-octulosonic acid) in physiological conditions. The chain is CMP-sialic acid transporter 2 from Oryza sativa subsp. japonica (Rice).